A 308-amino-acid chain; its full sequence is Bifunctional protein FolD (308 aa).

Residues 171-173 (GRS), Ser-198, and Ile-239 contribute to the NADP(+) site.

Belongs to the tetrahydrofolate dehydrogenase/cyclohydrolase family. As to quaternary structure, homodimer.

The enzyme catalyses (6R)-5,10-methylene-5,6,7,8-tetrahydrofolate + NADP(+) = (6R)-5,10-methenyltetrahydrofolate + NADPH. It catalyses the reaction (6R)-5,10-methenyltetrahydrofolate + H2O = (6R)-10-formyltetrahydrofolate + H(+). It participates in one-carbon metabolism; tetrahydrofolate interconversion. Its function is as follows. Catalyzes the oxidation of 5,10-methylenetetrahydrofolate to 5,10-methenyltetrahydrofolate and then the hydrolysis of 5,10-methenyltetrahydrofolate to 10-formyltetrahydrofolate. The sequence is that of Bifunctional protein FolD from Borreliella burgdorferi (strain ZS7) (Borrelia burgdorferi).